Here is a 324-residue protein sequence, read N- to C-terminus: tRNA dimethylallyltransferase (324 aa).

Residue 17-24 coordinates ATP; that stretch reads GPTASGKT. 19-24 contributes to the substrate binding site; that stretch reads TASGKT. Interaction with substrate tRNA stretches follow at residues 42–45, 166–170, 251–256, and 284–291; these read DSAL, QRIQR, RCVGYR, and KRQITWLR.

The protein belongs to the IPP transferase family. As to quaternary structure, monomer. Requires Mg(2+) as cofactor.

It carries out the reaction adenosine(37) in tRNA + dimethylallyl diphosphate = N(6)-dimethylallyladenosine(37) in tRNA + diphosphate. Its function is as follows. Catalyzes the transfer of a dimethylallyl group onto the adenine at position 37 in tRNAs that read codons beginning with uridine, leading to the formation of N6-(dimethylallyl)adenosine (i(6)A). This Burkholderia lata (strain ATCC 17760 / DSM 23089 / LMG 22485 / NCIMB 9086 / R18194 / 383) protein is tRNA dimethylallyltransferase.